The primary structure comprises 137 residues: Phosphomevalonate dehydratase small subunit (137 aa).

S65 acts as the Proton acceptor in catalysis.

It belongs to the AcnX type II small subunit family. As to quaternary structure, heterodimer composed of a large subunit (PMDh-L) and a small subunit (PMDh-S).

The enzyme catalyses (R)-5-phosphomevalonate = (2E)-3-methyl-5-phosphooxypent-2-enoate + H2O. It functions in the pathway isoprenoid biosynthesis; isopentenyl diphosphate biosynthesis via mevalonate pathway. Its function is as follows. Component of a hydro-lyase that catalyzes the dehydration of mevalonate 5-phosphate (MVA5P) to form trans-anhydromevalonate 5-phosphate (tAHMP). Involved in the archaeal mevalonate (MVA) pathway, which provides fundamental precursors for isoprenoid biosynthesis, such as isopentenyl diphosphate (IPP) and dimethylallyl diphosphate (DMAPP). The protein is Phosphomevalonate dehydratase small subunit of Methanococcoides burtonii (strain DSM 6242 / NBRC 107633 / OCM 468 / ACE-M).